Reading from the N-terminus, the 198-residue chain is Na(+)-translocating NADH-quinone reductase subunit E (198 aa).

The next 6 helical transmembrane spans lie at 11 to 31 (SIFI…FLAV), 39 to 59 (FGLG…NNLV), 77 to 97 (FLNF…LEMV), 110 to 130 (GIFL…SFMV), 140 to 160 (IVYG…LAGI), and 176 to 196 (LGIT…FSGV).

This sequence belongs to the NqrDE/RnfAE family. In terms of assembly, composed of six subunits; NqrA, NqrB, NqrC, NqrD, NqrE and NqrF.

It is found in the cell inner membrane. The catalysed reaction is a ubiquinone + n Na(+)(in) + NADH + H(+) = a ubiquinol + n Na(+)(out) + NAD(+). Its function is as follows. NQR complex catalyzes the reduction of ubiquinone-1 to ubiquinol by two successive reactions, coupled with the transport of Na(+) ions from the cytoplasm to the periplasm. NqrA to NqrE are probably involved in the second step, the conversion of ubisemiquinone to ubiquinol. This is Na(+)-translocating NADH-quinone reductase subunit E from Aliivibrio salmonicida (strain LFI1238) (Vibrio salmonicida (strain LFI1238)).